Consider the following 1020-residue polypeptide: Sodium/potassium-transporting ATPase subunit alpha-2 (1020 aa).

The propeptide occupies 1-5 (MGRGA). A disordered region spans residues 1–31 (MGRGAGREYSPAATTAENGGGKKKQKEKELD). At 6–85 (GREYSPAATT…NALTPPPTTP (80 aa)) the chain is on the cytoplasmic side. S10 carries the post-translational modification Phosphoserine. Residues 80–82 (PPP) are interaction with phosphoinositide-3 kinase. Residues 86–106 (EWVKFCRQLFGGFSILLWIGA) traverse the membrane as a helical segment. Over 107-129 (ILCFLAYGIQAAMEDEPSNDNLY) the chain is Extracellular. A helical membrane pass occupies residues 130-150 (LGVVLAAVVIVTGCFSYYQEA). Residues 151–286 (KSSKIMDSFK…VGRTPIAMEI (136 aa)) lie on the Cytoplasmic side of the membrane. The segment covering 212 to 227 (DNSSLTGESEPQTRSP) has biased composition (polar residues). Residues 212 to 231 (DNSSLTGESEPQTRSPEFTH) are disordered. The chain crosses the membrane as a helical span at residues 287–306 (EHFIQLITGVAVFLGVSFFV). The Extracellular portion of the chain corresponds to 307–318 (LSLILGYSWLEA). Residues 319–336 (VIFLIGIIVANVPEGLLA) traverse the membrane as a helical segment. Residues 337-769 (TVTVCLTLTA…EEGRLIFDNL (433 aa)) are Cytoplasmic-facing. The active-site 4-aspartylphosphate intermediate is the D374. Phosphoserine is present on residues S439, S450, S496, and S559. T570 is subject to Phosphothreonine. Residues S587 and S672 each carry the phosphoserine modification. The Mg(2+) site is built by D714 and D718. The chain crosses the membrane as a helical span at residues 770–789 (KKSIAYTLTSNIPEITPFLL). Topologically, residues 790–799 (FIIANIPLPL) are extracellular. Residues 800–820 (GTVTILCIDLGTDMVPAISLA) traverse the membrane as a helical segment. The Cytoplasmic segment spans residues 821–840 (YEAAESDIMKRQPRNSQTDK). At S826 the chain carries Phosphoserine. Residues 841–863 (LVNERLISMAYGQIGMIQALGGF) form a helical membrane-spanning segment. The Extracellular segment spans residues 864–915 (FTYFVILAENGFLPSRLLGIRLDWDDRTMNDLEDSYGQEWTYEQRKVVEFTC). A helical membrane pass occupies residues 916-935 (HTAFFASIVVVQWADLIICK). Topologically, residues 936–948 (TRRNSVFQQGMKN) are cytoplasmic. Residue S940 is modified to Phosphoserine; by PKA. A helical transmembrane segment spans residues 949 to 967 (KILIFGLLEETALAAFLSY). Over 968–982 (CPGMGVALRMYPLKV) the chain is Extracellular. A helical membrane pass occupies residues 983 to 1003 (TWWFCAFPYSLLIFIYDEVRK). Over 1004–1020 (LILRRYPGGWVEKETYY) the chain is Cytoplasmic.

Belongs to the cation transport ATPase (P-type) (TC 3.A.3) family. Type IIC subfamily. The sodium/potassium-transporting ATPase is composed of a catalytic alpha subunit, an auxiliary non-catalytic beta subunit and an additional regulatory subunit. Interacts with regulatory subunit FXYD1.

It is found in the membrane. Its subcellular location is the cell membrane. The catalysed reaction is K(+)(out) + Na(+)(in) + ATP + H2O = K(+)(in) + Na(+)(out) + ADP + phosphate + H(+). Functionally, this is the catalytic component of the active enzyme, which catalyzes the hydrolysis of ATP coupled with the exchange of sodium and potassium ions across the plasma membrane. This action creates the electrochemical gradient of sodium and potassium, providing the energy for active transport of various nutrients. The protein is Sodium/potassium-transporting ATPase subunit alpha-2 (ATP1A2) of Homo sapiens (Human).